A 755-amino-acid polypeptide reads, in one-letter code: Catalase-peroxidase (755 aa).

A cross-link (tryptophyl-tyrosyl-methioninium (Trp-Tyr) (with M-271)) is located at residues 91–245 (WHSAGTYRTA…LAAVQMGLIY (155 aa)). Histidine 92 (proton acceptor) is an active-site residue. A disordered region spans residues 193 to 229 (DNRYGKDPESMQPPGEGTLVAEPAEHGNEESRTNQGE). Residues 215-224 (PAEHGNEESR) show a composition bias toward basic and acidic residues. The segment at residues 245–271 (YVNPEGPEGNPDPVASAKDIRETFGRM) is a cross-link (tryptophyl-tyrosyl-methioninium (Tyr-Met) (with W-91)). Histidine 286 is a binding site for heme.

It belongs to the peroxidase family. Peroxidase/catalase subfamily. Homodimer or homotetramer. Heme b serves as cofactor. Post-translationally, formation of the three residue Trp-Tyr-Met cross-link is important for the catalase, but not the peroxidase activity of the enzyme.

The enzyme catalyses H2O2 + AH2 = A + 2 H2O. It catalyses the reaction 2 H2O2 = O2 + 2 H2O. In terms of biological role, bifunctional enzyme with both catalase and broad-spectrum peroxidase activity. This is Catalase-peroxidase from Pseudomonas fluorescens (strain Pf0-1).